Here is a 412-residue protein sequence, read N- to C-terminus: L-cysteine:1D-myo-inositol 2-amino-2-deoxy-alpha-D-glucopyranoside ligase (412 aa).

Cys43 contacts Zn(2+). Residues Cys43–Thr46, Thr58, and Asn81–Thr83 each bind L-cysteinyl-5'-AMP. The short motif at Ile45 to His55 is the 'HIGH' region element. The 'ERGGDP' region motif lies at Glu187–Pro192. Trp227 is an L-cysteinyl-5'-AMP binding site. Cys231 lines the Zn(2+) pocket. An L-cysteinyl-5'-AMP-binding site is contributed by Gly249–Asp251. His256 contributes to the Zn(2+) binding site. L-cysteinyl-5'-AMP is bound at residue Ile283. The 'KMSKS' region motif lies at Lys289 to Ser293.

It belongs to the class-I aminoacyl-tRNA synthetase family. MshC subfamily. In terms of assembly, monomer. Zn(2+) is required as a cofactor.

The catalysed reaction is 1D-myo-inositol 2-amino-2-deoxy-alpha-D-glucopyranoside + L-cysteine + ATP = 1D-myo-inositol 2-(L-cysteinylamino)-2-deoxy-alpha-D-glucopyranoside + AMP + diphosphate + H(+). Its function is as follows. Catalyzes the ATP-dependent condensation of GlcN-Ins and L-cysteine to form L-Cys-GlcN-Ins. The polypeptide is L-cysteine:1D-myo-inositol 2-amino-2-deoxy-alpha-D-glucopyranoside ligase (Saccharopolyspora erythraea (strain ATCC 11635 / DSM 40517 / JCM 4748 / NBRC 13426 / NCIMB 8594 / NRRL 2338)).